Consider the following 103-residue polypeptide: Cell division protein FtsB (103 aa).

Over 1 to 3 (MGK) the chain is Cytoplasmic. The chain crosses the membrane as a helical span at residues 4–21 (LTLLLLAILVWLQYSLWF). Over 22-103 (GKNGIHDYTR…RAQSAGQNNR (82 aa)) the chain is Periplasmic. Positions 31–71 (RVNNDVAAQQATNAKLKARNDQLFAEIDDLNGGQEALEERA) form a coiled coil.

This sequence belongs to the FtsB family. As to quaternary structure, part of a complex composed of FtsB, FtsL and FtsQ.

The protein localises to the cell inner membrane. Functionally, essential cell division protein. May link together the upstream cell division proteins, which are predominantly cytoplasmic, with the downstream cell division proteins, which are predominantly periplasmic. This chain is Cell division protein FtsB, found in Escherichia coli O81 (strain ED1a).